The sequence spans 1063 residues: Structural polyprotein (1063 aa).

The segment at 1-131 (MASTTPITME…LGPPTNPFQA (131 aa)) is disordered. Positions 30-69 (GASQSRRPRPPRQRDSSTTGDDSGRDSGGPRRRRGNRGRG) are human C1QBP/SF2P32-binding. A Phosphoserine; by host modification is found at Ser-46. Basic residues predominate over residues 59-69 (PRRRRGNRGRG). Positions 70–87 (QRRDWSRAPPPPEERQET) are enriched in basic and acidic residues. Positions 93-107 (APKPSRAPPQQPQPP) are enriched in pro residues. Residues Cys-153 and Cys-197 are joined by a disulfide bond. Residues 279-300 (GAPQAFLAGLLLAAVAVGTARA) are functions as E2 signal peptide. Topologically, residues 301 to 534 (GLQPRADMAA…LWLATANALS (234 aa)) are extracellular. N-linked (GlcNAc...) asparagine; by host glycosylation is found at Asn-353, Asn-371, Asn-410, and Asn-429. Residues 535 to 555 (LDHALAAFVLLVPWVLIFMVC) form a helical membrane-spanning segment. The Cytoplasmic segment spans residues 556 to 582 (RRTCRRRGAAAALTAVVLQGYNPPAYG). Residues 563–582 (GAAAALTAVVLQGYNPPAYG) form a functions as E1 signal peptide region. The Extracellular segment spans residues 583-1028 (EEAFTYLCTA…QTWAEWAAAH (446 aa)). 8 disulfide bridges follow: Cys-590–Cys-595, Cys-619–Cys-824, Cys-641–Cys-653, Cys-699–Cys-712, Cys-758–Cys-767, Cys-807–Cys-817, Cys-931–Cys-934, and Cys-950–Cys-983. Asn-658 carries N-linked (GlcNAc...) asparagine; by host glycosylation. Ca(2+) contacts are provided by Asn-670 and Ala-671. Ca(2+)-binding residues include Asp-718 and Thr-719. 2 N-linked (GlcNAc...) asparagine; by host glycosylation sites follow: Asn-759 and Asn-791. Thr-1011 and Thr-1012 each carry an O-linked (GalNAc...) threonine; by host glycan. The chain crosses the membrane as a helical span at residues 1029–1049 (WWQLTLGAICALLLAGLLACC). Over 1050-1063 (AKCLYYLRGAIAPR) the chain is Extracellular.

As to quaternary structure, homodimer; further assembles into homooligomer. Interacts with human C1QBP. Interacts (via N-terminus) with protease/methyltransferase p150. In terms of assembly, heterodimer with spike glycoprotein E2. Heterodimer with spike glycoprotein E1. Structural polyprotein: Specific enzymatic cleavages in vivo yield mature proteins. Two signal peptidase-mediated cleavages within the polyprotein produce the structural proteins capsid, E2, and E1. The E2 signal peptide remains attached to the C-terminus of the capsid protein after cleavage by the signal peptidase. Another signal peptide at E2 C-terminus directs E1 to the ER, with a similar mechanism. In terms of processing, contains three N-linked oligosaccharides. Post-translationally, capsid is phosphorylated on Ser-46 by host. This phosphorylation negatively regulates capsid protein RNA-binding activity. Dephosphorylated by human PP1A.

Its subcellular location is the virion. It localises to the host cytoplasm. The protein resides in the host mitochondrion. It is found in the virion membrane. The protein localises to the host Golgi apparatus membrane. Functionally, capsid protein interacts with genomic RNA and assembles into icosahedric core particles 65-70 nm in diameter. The resulting nucleocapsid eventually associates with the cytoplasmic domain of E2 at the cell membrane, leading to budding and formation of mature virions from host Golgi membranes. Phosphorylation negatively regulates RNA-binding activity, possibly delaying virion assembly during the viral replication phase. Capsid protein dimerizes and becomes disulfide-linked in the virion. Modulates genomic RNA replication. Modulates subgenomic RNA synthesis by interacting with human C1QBP/SF2P32. Induces both perinuclear clustering of mitochondria and the formation of electron-dense intermitochondrial plaques, both hallmarks of rubella virus infected cells. Induces apoptosis when expressed in transfected cells. Responsible for viral attachment to target host cell, by binding to the cell receptor. Its transport to the plasma membrane depends on interaction with E1 protein. The surface glycoproteins display an irregular helical organization and a pseudo-tetrameric inner nucleocapsid arrangement. Its function is as follows. Class II viral fusion protein. Fusion activity is inactive as long as E1 is bound to E2 in mature virion. After virus attachment to target cell and clathrin-mediated endocytosis, acidification of the endosome would induce dissociation of E1/E2 heterodimer and concomitant trimerization of the E1 subunits. This E1 homotrimer is fusion active, and promotes release of viral nucleocapsid in cytoplasm after endosome and viral membrane fusion. The cytoplasmic tail of spike glycoprotein E1 modulates virus release. The surface glycoproteins display an irregular helical organization and a pseudo-tetrameric inner nucleocapsid arrangement. This Homo sapiens (Human) protein is Structural polyprotein.